A 240-amino-acid polypeptide reads, in one-letter code: Pyridoxine 5'-phosphate synthase (240 aa).

Residue Asn-7 coordinates 3-amino-2-oxopropyl phosphate. 9–10 (DH) is a binding site for 1-deoxy-D-xylulose 5-phosphate. Arg-18 serves as a coordination point for 3-amino-2-oxopropyl phosphate. His-43 acts as the Proton acceptor in catalysis. Arg-45 and His-50 together coordinate 1-deoxy-D-xylulose 5-phosphate. Catalysis depends on Glu-70, which acts as the Proton acceptor. Thr-100 lines the 1-deoxy-D-xylulose 5-phosphate pocket. The active-site Proton donor is the His-191. 3-amino-2-oxopropyl phosphate contacts are provided by residues Gly-192 and 213–214 (GH).

The protein belongs to the PNP synthase family. Homooctamer; tetramer of dimers.

It localises to the cytoplasm. The enzyme catalyses 3-amino-2-oxopropyl phosphate + 1-deoxy-D-xylulose 5-phosphate = pyridoxine 5'-phosphate + phosphate + 2 H2O + H(+). Its pathway is cofactor biosynthesis; pyridoxine 5'-phosphate biosynthesis; pyridoxine 5'-phosphate from D-erythrose 4-phosphate: step 5/5. Functionally, catalyzes the complicated ring closure reaction between the two acyclic compounds 1-deoxy-D-xylulose-5-phosphate (DXP) and 3-amino-2-oxopropyl phosphate (1-amino-acetone-3-phosphate or AAP) to form pyridoxine 5'-phosphate (PNP) and inorganic phosphate. This Microcystis aeruginosa (strain NIES-843 / IAM M-2473) protein is Pyridoxine 5'-phosphate synthase.